The sequence spans 232 residues: MAQSKRVKAIAAAVAPGKAYAFEDAIKILKTATKAKFVESIDVAVRLGVDAKKSDQQVRGSTVLPAGTGKSVRVAVFAPAGAKADEALAAGAEAVGMDDLAEKMQAGDLSYDVVIATPDAMRVVGKLGTLLGPRGLMPNPKVGTVSANPGEAVKNAKSGQVRYRTDKAGIIHCTIGKASFDDEALKSNLQALLLDLVKAKPATSKGTYLQKVSVSSTMGPGVTVDQSSLSLK.

This sequence belongs to the universal ribosomal protein uL1 family. In terms of assembly, part of the 50S ribosomal subunit.

Binds directly to 23S rRNA. The L1 stalk is quite mobile in the ribosome, and is involved in E site tRNA release. Functionally, protein L1 is also a translational repressor protein, it controls the translation of the L11 operon by binding to its mRNA. The chain is Large ribosomal subunit protein uL1 from Xanthomonas oryzae pv. oryzae (strain MAFF 311018).